Consider the following 255-residue polypeptide: Serine/threonine-protein phosphatase PP1 (255 aa).

Mn(2+)-binding residues include Asp2, His4, Asp30, and Asn62. His63 (proton donor) is an active-site residue. Mn(2+) is bound by residues His111 and His186.

It belongs to the PPP phosphatase family. PP-1 subfamily. Mn(2+) is required as a cofactor.

The catalysed reaction is O-phospho-L-seryl-[protein] + H2O = L-seryl-[protein] + phosphate. It carries out the reaction O-phospho-L-threonyl-[protein] + H2O = L-threonyl-[protein] + phosphate. The chain is Serine/threonine-protein phosphatase PP1 from Brassica napus (Rape).